Here is a 283-residue protein sequence, read N- to C-terminus: Thymidylate synthase (283 aa).

Arginine 22 is a binding site for dUMP. Catalysis depends on cysteine 160, which acts as the Nucleophile. Residues arginine 180–aspartate 183, asparagine 191, and histidine 221–tyrosine 223 contribute to the dUMP site. Aspartate 183 contacts (6R)-5,10-methylene-5,6,7,8-tetrahydrofolate. Serine 282 is a (6R)-5,10-methylene-5,6,7,8-tetrahydrofolate binding site.

Belongs to the thymidylate synthase family. Bacterial-type ThyA subfamily. In terms of assembly, homodimer.

Its subcellular location is the cytoplasm. It catalyses the reaction dUMP + (6R)-5,10-methylene-5,6,7,8-tetrahydrofolate = 7,8-dihydrofolate + dTMP. It functions in the pathway pyrimidine metabolism; dTTP biosynthesis. Its function is as follows. Catalyzes the reductive methylation of 2'-deoxyuridine-5'-monophosphate (dUMP) to 2'-deoxythymidine-5'-monophosphate (dTMP) while utilizing 5,10-methylenetetrahydrofolate (mTHF) as the methyl donor and reductant in the reaction, yielding dihydrofolate (DHF) as a by-product. This enzymatic reaction provides an intracellular de novo source of dTMP, an essential precursor for DNA biosynthesis. The protein is Thymidylate synthase of Vibrio cholerae serotype O1 (strain ATCC 39541 / Classical Ogawa 395 / O395).